A 925-amino-acid polypeptide reads, in one-letter code: MDMFPLTWIFLALYFSGHKVRSQQDPPCGGRLNSKDAGYITSPGYPQDYPSHQNCEWVVYAPEPNQKIVLNFNPHFEIEKHDCKYDFIEIRDGDSESADLLGKHCGNIAPPTIISSGSVLYIKFTSDYARQGAGFSLRYEIFKTGSEDCSKNFTSPNGTIESPGFPEKYPHNLDCTFTILAKPRMEIILQFLTFDLEHDPLQVGEGDCKYDWLDIWDGIPHVGPLIGKYCGTKTPSKLRSSTGILSLTFHTDMAVAKDGFSARYYLVHQEPPENFQCNAPLGMESGRIANEQISASSTFSDGRWTPQQSRLHGDDNGWTPNVDSNKEYLQVDLRFLTMLTAIATQGAISRETQKGYYVKSYKLEVSTNGEDWMVYRHGKNHKVFQANNDATELVLNKLHTPLLTRFIRIRPQTWHLGIALRLELFGCRVTDAPCSNMLGMLSGLIADTQISASSTREYLWSPSAARLVSSRSGWFPRNPQAQPGEEWLQVDLGTPKTVKGVIIQGARGGDSITAMEARAFVRKFKVSYSLNGKDWEYIQDPRTQQPKLFEGNMHYDTPDIRRFEPVPAQYVRVYPERWSPAGIGMRLEVLGCDWTDSKPTVETLGPTVKSEETTTPYPMDEDATECGENCSFEDDKDLQLPSGFNCNFDFPEETCGWMYDRAKWLQSTWISSANPNDRTFPDDKNFLKLQSDGGREGQFGRLISPPVHLPRSPVCMEFQYQAMGGHGVALQVVREARQESKLLWVIREDQGSEWKHGRIILPSYDMEYQIVFEGVIGKGRSGEISIDDIRISTDVPLENCMEPISAFAVDIPEIHGGEGYEDEIDDDYEGDWNNSSSTSGAGSPSSGKEKSWLYTLDPILITIIAMSSLGVLLGATCAGLLLYCTCSYSGLSSRSCTTLENYNFELYDGLKHKVKINHQKCCSEA.

An N-terminal signal peptide occupies residues 1 to 22; that stretch reads MDMFPLTWIFLALYFSGHKVRS. Residues 23–858 are Extracellular-facing; sequence QQDPPCGGRL…EKSWLYTLDP (836 aa). 3 disulfide bridges follow: Cys28-Cys55, Cys83-Cys105, and Cys149-Cys175. 2 consecutive CUB domains span residues 28–142 and 149–267; these read CGGR…YEIF and CSKN…YYLV. N-linked (GlcNAc...) asparagine glycosylation is found at Asn152 and Asn157. Positions 197, 211, and 252 each coordinate Ca(2+). Cys208 and Cys230 form a disulfide bridge. 2 disulfide bridges follow: Cys277/Cys427 and Cys434/Cys592. F5/8 type C domains lie at 277–427 and 434–592; these read CNAP…LFGC and CSNM…VLGC. Residues 297 to 310 show a composition bias toward polar residues; that stretch reads STFSDGRWTPQQSR. A disordered region spans residues 297 to 317; the sequence is STFSDGRWTPQQSRLHGDDNG. Positions 601–621 are disordered; the sequence is VETLGPTVKSEETTTPYPMDE. Asn629 is a glycosylation site (N-linked (GlcNAc...) asparagine). An MAM domain is found at 642-802; that stretch reads SGFNCNFDFP…TDVPLENCME (161 aa). Residues 820–830 are compositionally biased toward acidic residues; the sequence is YEDEIDDDYEG. The segment at 820-849 is disordered; that stretch reads YEDEIDDDYEGDWNNSSSTSGAGSPSSGKE. N-linked (GlcNAc...) asparagine glycosylation is found at Asn833 and Asn834. The segment covering 835–846 has biased composition (low complexity); that stretch reads SSSTSGAGSPSS. A helical transmembrane segment spans residues 859 to 883; sequence ILITIIAMSSLGVLLGATCAGLLLY. At 884 to 925 the chain is on the cytoplasmic side; the sequence is CTCSYSGLSSRSCTTLENYNFELYDGLKHKVKINHQKCCSEA.

This sequence belongs to the neuropilin family. Heterodimer with NRP1. Binds PLXNB1. Found in certain neuronal populations of the CNS, including dorsal root ganglia, and in other non-neuronal tissues including mesenchymal tissue lining in the ribs.

It is found in the membrane. In terms of biological role, high affinity receptor for semaphorins 3C, 3F, VEGF-165 and VEGF-145 isoforms of VEGF, and the PLGF-2 isoform of PGF. This chain is Neuropilin-2 (Nrp2), found in Rattus norvegicus (Rat).